The sequence spans 288 residues: MSQISAKDVKDLRDITGVGMMDCKKALEESAGDMQKAIEYLRKKGAALAAKRAEKEAREGMVAIRLSEDRKAGVILELNCETDFVARGAVFTGFAGALTSLALDNAAASPEELLALSLGEEYGNEKVDDAMKTMTGRLGEKLELKRLALFLAPDGVVESYVHPGAQLGSLVQLATDKPEEAGVLARDIAMQVAAASPIVADRSAVPADYIEKEREIYRQQALGQGKPEQFVEKIVTGRLEKYYQEVVLTEQSFIKDGNIKVSDVLSDFRKKHQAQVDVKGFVRYQLGE.

The segment at 82–85 is involved in Mg(2+) ion dislocation from EF-Tu; sequence TDFV.

This sequence belongs to the EF-Ts family.

It localises to the cytoplasm. Associates with the EF-Tu.GDP complex and induces the exchange of GDP to GTP. It remains bound to the aminoacyl-tRNA.EF-Tu.GTP complex up to the GTP hydrolysis stage on the ribosome. The sequence is that of Elongation factor Ts from Chlorobium limicola (strain DSM 245 / NBRC 103803 / 6330).